The following is a 131-amino-acid chain: MSWQTYVDDHLMCDVDGQHLTASAIVGHDGSIWAQSAGFPQFKPEEITGIMNDFAEPGSLAPTGLYLAGMKYMVIQGEPGAVIRGKKGSGGVTIKKTGQALIFGIYEEPMTPGQCNMVVERMGDYLVDQGL.

It belongs to the profilin family. In terms of assembly, occurs in many kinds of cells as a complex with monomeric actin in a 1:1 ratio.

It is found in the cytoplasm. The protein localises to the cytoskeleton. In terms of biological role, binds to actin and affects the structure of the cytoskeleton. At high concentrations, profilin prevents the polymerization of actin, whereas it enhances it at low concentrations. By binding to PIP2, it inhibits the formation of IP3 and DG. The chain is Profilin-1 from Lilium longiflorum (Trumpet lily).